The sequence spans 318 residues: Methionyl-tRNA formyltransferase (318 aa).

113 to 116 (SLLP) lines the (6S)-5,6,7,8-tetrahydrofolate pocket.

Belongs to the Fmt family.

The catalysed reaction is L-methionyl-tRNA(fMet) + (6R)-10-formyltetrahydrofolate = N-formyl-L-methionyl-tRNA(fMet) + (6S)-5,6,7,8-tetrahydrofolate + H(+). Functionally, attaches a formyl group to the free amino group of methionyl-tRNA(fMet). The formyl group appears to play a dual role in the initiator identity of N-formylmethionyl-tRNA by promoting its recognition by IF2 and preventing the misappropriation of this tRNA by the elongation apparatus. This Hahella chejuensis (strain KCTC 2396) protein is Methionyl-tRNA formyltransferase.